The chain runs to 236 residues: 4-hydroxy-tetrahydrodipicolinate reductase (236 aa).

Residues 11–16 (GASGRM), 92–94 (GTT), and 116–119 (GSNF) each bind NAD(+). His148 (proton donor/acceptor) is an active-site residue. Residue His149 participates in (S)-2,3,4,5-tetrahydrodipicolinate binding. The Proton donor role is filled by Lys152. Position 158–159 (158–159 (GS)) interacts with (S)-2,3,4,5-tetrahydrodipicolinate.

The protein belongs to the DapB family.

It is found in the cytoplasm. The enzyme catalyses (S)-2,3,4,5-tetrahydrodipicolinate + NAD(+) + H2O = (2S,4S)-4-hydroxy-2,3,4,5-tetrahydrodipicolinate + NADH + H(+). It carries out the reaction (S)-2,3,4,5-tetrahydrodipicolinate + NADP(+) + H2O = (2S,4S)-4-hydroxy-2,3,4,5-tetrahydrodipicolinate + NADPH + H(+). It participates in amino-acid biosynthesis; L-lysine biosynthesis via DAP pathway; (S)-tetrahydrodipicolinate from L-aspartate: step 4/4. Its function is as follows. Catalyzes the conversion of 4-hydroxy-tetrahydrodipicolinate (HTPA) to tetrahydrodipicolinate. This Xylella fastidiosa (strain M23) protein is 4-hydroxy-tetrahydrodipicolinate reductase.